Reading from the N-terminus, the 295-residue chain is Mycothiol acetyltransferase (295 aa).

N-acetyltransferase domains follow at residues 4 to 138 (TEWR…RPLT) and 149 to 295 (VRIA…YAAN). Asp-36 serves as a coordination point for 1D-myo-inositol 2-(L-cysteinylamino)-2-deoxy-alpha-D-glucopyranoside. Acetyl-CoA is bound by residues 77–79 (LVV) and 85–90 (RRGIGA). The 1D-myo-inositol 2-(L-cysteinylamino)-2-deoxy-alpha-D-glucopyranoside site is built by Glu-176, Lys-217, and Glu-225. Acetyl-CoA-binding positions include 229–231 (VGV) and 236–242 (QGRGLGY). Tyr-266 serves as a coordination point for 1D-myo-inositol 2-(L-cysteinylamino)-2-deoxy-alpha-D-glucopyranoside. 271–276 (NSAAVN) is an acetyl-CoA binding site.

The protein belongs to the acetyltransferase family. MshD subfamily. Monomer.

The enzyme catalyses 1D-myo-inositol 2-(L-cysteinylamino)-2-deoxy-alpha-D-glucopyranoside + acetyl-CoA = mycothiol + CoA + H(+). Its function is as follows. Catalyzes the transfer of acetyl from acetyl-CoA to desacetylmycothiol (Cys-GlcN-Ins) to form mycothiol. This Mycolicibacterium smegmatis (strain ATCC 700084 / mc(2)155) (Mycobacterium smegmatis) protein is Mycothiol acetyltransferase (mshD).